Reading from the N-terminus, the 372-residue chain is Transaldolase 2 (372 aa).

Lysine 140 acts as the Schiff-base intermediate with substrate in catalysis.

The protein belongs to the transaldolase family. Type 2 subfamily.

The protein resides in the cytoplasm. It catalyses the reaction D-sedoheptulose 7-phosphate + D-glyceraldehyde 3-phosphate = D-erythrose 4-phosphate + beta-D-fructose 6-phosphate. It functions in the pathway carbohydrate degradation; pentose phosphate pathway; D-glyceraldehyde 3-phosphate and beta-D-fructose 6-phosphate from D-ribose 5-phosphate and D-xylulose 5-phosphate (non-oxidative stage): step 2/3. Its function is as follows. Transaldolase is important for the balance of metabolites in the pentose-phosphate pathway. This Streptomyces avermitilis (strain ATCC 31267 / DSM 46492 / JCM 5070 / NBRC 14893 / NCIMB 12804 / NRRL 8165 / MA-4680) protein is Transaldolase 2.